Here is a 392-residue protein sequence, read N- to C-terminus: MVSFISISQGVSLCLLVSSMMLGSSAVPVSGKSGSSNTAVSASDNAALPPLISSRCAPPSNKGSKSDLQAEPYNMQKNTEWYESHGGNLTSIGKRDDNLVGGMTLDLPSDAPPISLSSSTNSASDGGKVVAATTAQIQEFTKYAGIAATAYCRSVVPGNKWDCVQCQKWVPDGKIITTFTSLLSDTNGYVLRSDKQKTIYLVFRGTNSFRSAITDIVFNFSDYKPVKGAKVHAGFLSSYEQVVNDYFPVVQEQLTAHPTYKVIVTGHSLGGAQALLAGMDLYQREPRLSPKNLSIFTVGGPRVGNPTFAYYVESTGIPFQRTVHKRDIVPHVPPQSFGFLHPGVESWIKSGTSNVQICTSEIETKDCSNSIVPFTSILDHLSYFDINEGSCL.

The first 26 residues, 1 to 26 (MVSFISISQGVSLCLLVSSMMLGSSA), serve as a signal peptide directing secretion. The propeptide occupies 27–95 (VPVSGKSGSS…GGNLTSIGKR (69 aa)). Positions 50–69 (PLISSRCAPPSNKGSKSDLQ) are disordered. Intrachain disulfides connect Cys152-Cys391, Cys163-Cys166, and Cys358-Cys367. Ser268 acts as the Nucleophile in catalysis. Asp327 functions as the Charge relay system in the catalytic mechanism. Asp379 contributes to the Ca(2+) binding site. His380 serves as the catalytic Charge relay system.

Belongs to the AB hydrolase superfamily. Lipase family.

It localises to the secreted. The protein localises to the extracellular space. The catalysed reaction is a triacylglycerol + H2O = a diacylglycerol + a fatty acid + H(+). Its activity is regulated as follows. Lipase activity is maximal at a lipid-water interface (interfacial activation), probably by an induced conformational change that results in an increased accessibility of the active site to the substrate. Hydrolyzes ester bonds of triglycerides as well as of their derived partial glycerides with a strong 1,3-positional specificity. The chain is Lipase from Rhizopus niveus.